We begin with the raw amino-acid sequence, 1741 residues long: S-layer protein (1741 aa).

Residues 894–904 (SFTSDSANGSG) show a composition bias toward polar residues. A disordered region spans residues 894-913 (SFTSDSANGSGHSVEGGTGD).

In terms of processing, glycosylated.

The protein localises to the secreted. It localises to the cell wall. Its subcellular location is the S-layer. Its function is as follows. S-layer protein. The S-layer is a paracrystalline mono-layered assembly of proteins which coats the surface of bacteria. Under laboratory conditions, has a supportive but not a critical role in the function of the cyanobacterium. Shows no apparent hemolytic activity against sheep erythrocytes, however, a slight hemolytic activity is detected during the conformational change caused by the rebinding of Ca(2+). This is S-layer protein from Synechocystis sp. (strain ATCC 27184 / PCC 6803 / Kazusa).